Consider the following 205-residue polypeptide: Arginine exporter protein ArgO (205 aa).

Transmembrane regions (helical) follow at residues 1–21 (MLAV…PLGP), 42–62 (LCAL…SALL), 67–87 (LLLA…GWGA), 111–131 (ILVT…DTFV), 147–167 (WFAL…ALLA), and 185–205 (LFVG…GFGL).

Belongs to the LysE/ArgO transporter (TC 2.A.75) family.

It localises to the cell inner membrane. It catalyses the reaction L-arginine(in) = L-arginine(out). Its function is as follows. Involved in the export of arginine. Important to control the intracellular level of arginine and the correct balance between arginine and lysine. This is Arginine exporter protein ArgO from Yersinia pseudotuberculosis serotype IB (strain PB1/+).